The sequence spans 1172 residues: Serine/threonine-protein kinase Nek10 (1172 aa).

Residues 209–251 form an ARM repeat; the sequence is GAHKTLVNLLGARDTNVLLGSLLALASLAESQECREKISELNI. Residues 481–514 adopt a coiled-coil conformation; the sequence is YEELVSKLNLLVEDELKQIAENIESINQNKAPLK. Residues 519 to 712 enclose the Protein kinase domain; that stretch reads YAILDHLGSG…SEPYGEKADV (194 aa). Residues 525-533 and K548 each bind ATP; that span reads LGSGAFGCV. Residue D655 is the Proton acceptor of the active site. 2 disordered regions span residues 855–875 and 898–954; these read SELSESADLPPEGFQASYGKD and TYSE…GSRP. A compositionally biased stretch (polar residues) spans 919–945; that stretch reads PLKESTFNILKRSFSASGGERQSQTRD.

Belongs to the protein kinase superfamily. NEK Ser/Thr protein kinase family. NIMA subfamily. Interacts with RAF1 and MAP2K1; the interaction is direct with RAF1 and required for ERK1/2-signaling pathway activation in response to UV irradiation. The cofactor is Mg(2+). Expressed in the lung.

The enzyme catalyses L-seryl-[protein] + ATP = O-phospho-L-seryl-[protein] + ADP + H(+). It carries out the reaction L-threonyl-[protein] + ATP = O-phospho-L-threonyl-[protein] + ADP + H(+). Its function is as follows. Plays a role in the cellular response to UV irradiation. Mediates G2/M cell cycle arrest, MEK autoactivation and ERK1/2-signaling pathway activation in response to UV irradiation. In ciliated cells of airways, it is involved in the regulation of mucociliary transport. The chain is Serine/threonine-protein kinase Nek10 from Homo sapiens (Human).